The primary structure comprises 201 residues: Urease accessory protein UreG (201 aa).

12 to 19 (GPVGSGKT) serves as a coordination point for GTP.

This sequence belongs to the SIMIBI class G3E GTPase family. UreG subfamily. As to quaternary structure, homodimer. UreD, UreF and UreG form a complex that acts as a GTP-hydrolysis-dependent molecular chaperone, activating the urease apoprotein by helping to assemble the nickel containing metallocenter of UreC. The UreE protein probably delivers the nickel.

The protein localises to the cytoplasm. Functionally, facilitates the functional incorporation of the urease nickel metallocenter. This process requires GTP hydrolysis, probably effectuated by UreG. In Dechloromonas aromatica (strain RCB), this protein is Urease accessory protein UreG.